The following is a 107-amino-acid chain: U1-lycotoxin-Ls1d (107 aa).

A signal peptide spans 1 to 20 (MMKVLVVVALLVTLISYSSS). Residues 21-41 (EGIDDLEADELLSLMANEQTR) constitute a propeptide that is removed on maturation. 4 disulfides stabilise this stretch: Cys-44-Cys-59, Cys-51-Cys-68, Cys-58-Cys-86, and Cys-70-Cys-84.

This sequence belongs to the neurotoxin 19 (CSTX) family. 04 (U1-Lctx) subfamily. In terms of tissue distribution, expressed by the venom gland.

The protein resides in the secreted. The sequence is that of U1-lycotoxin-Ls1d from Lycosa singoriensis (Wolf spider).